We begin with the raw amino-acid sequence, 209 residues long: Uracil phosphoribosyltransferase (209 aa).

Residues Arg79, Arg104, and 131–139 contribute to the 5-phospho-alpha-D-ribose 1-diphosphate site; that span reads DPMLATGNS. Uracil-binding positions include Ile194 and 199–201; that span reads GDA. Position 200 (Asp200) interacts with 5-phospho-alpha-D-ribose 1-diphosphate.

The protein belongs to the UPRTase family. Mg(2+) is required as a cofactor.

It carries out the reaction UMP + diphosphate = 5-phospho-alpha-D-ribose 1-diphosphate + uracil. The protein operates within pyrimidine metabolism; UMP biosynthesis via salvage pathway; UMP from uracil: step 1/1. With respect to regulation, allosterically activated by GTP. Its function is as follows. Catalyzes the conversion of uracil and 5-phospho-alpha-D-ribose 1-diphosphate (PRPP) to UMP and diphosphate. The sequence is that of Uracil phosphoribosyltransferase from Acidovorax sp. (strain JS42).